A 202-amino-acid chain; its full sequence is GTP cyclohydrolase 1 (202 aa).

Positions 90, 93, and 163 each coordinate Zn(2+).

It belongs to the GTP cyclohydrolase I family. In terms of assembly, homomer.

The enzyme catalyses GTP + H2O = 7,8-dihydroneopterin 3'-triphosphate + formate + H(+). The protein operates within cofactor biosynthesis; 7,8-dihydroneopterin triphosphate biosynthesis; 7,8-dihydroneopterin triphosphate from GTP: step 1/1. This Mycolicibacterium gilvum (strain PYR-GCK) (Mycobacterium gilvum (strain PYR-GCK)) protein is GTP cyclohydrolase 1.